A 349-amino-acid polypeptide reads, in one-letter code: Zinc-type alcohol dehydrogenase-like protein PB24D3.08c (349 aa).

The protein belongs to the zinc-containing alcohol dehydrogenase family. Quinone oxidoreductase subfamily.

It localises to the cytoplasm. Its subcellular location is the nucleus. The sequence is that of Zinc-type alcohol dehydrogenase-like protein PB24D3.08c from Schizosaccharomyces pombe (strain 972 / ATCC 24843) (Fission yeast).